An 89-amino-acid polypeptide reads, in one-letter code: Small ribosomal subunit protein uS15 (89 aa).

This sequence belongs to the universal ribosomal protein uS15 family. Part of the 30S ribosomal subunit. Forms a bridge to the 50S subunit in the 70S ribosome, contacting the 23S rRNA.

In terms of biological role, one of the primary rRNA binding proteins, it binds directly to 16S rRNA where it helps nucleate assembly of the platform of the 30S subunit by binding and bridging several RNA helices of the 16S rRNA. Its function is as follows. Forms an intersubunit bridge (bridge B4) with the 23S rRNA of the 50S subunit in the ribosome. The sequence is that of Small ribosomal subunit protein uS15 from Brevibacillus brevis (strain 47 / JCM 6285 / NBRC 100599).